The primary structure comprises 184 residues: (2E)-enoyl-[ACP] glycyltransferase (184 aa).

The protein belongs to the FcoT family.

It catalyses the reaction a (3R)-3-[(carboxymethyl)amino]fatty acid + holo-[ACP] + H(+) = a (2E)-enoyl-[ACP] + glycine + H2O. It carries out the reaction (3R)-3-[(carboxylmethyl)amino]decanoate + holo-[ACP] + H(+) = (2E)-decenoyl-[ACP] + glycine + H2O. Involved in the biosynthesis of a unique class of isonitrile lipopeptides (INLPs) that seem to play a role in metal acquisition in M.marinum. Catalyzes a Michael addition of glycine to the beta-position of an alpha,beta-unsaturated fatty acyl-[ACP], producing a (3R)-3-[(carboxymethyl)amino]fatty acid. Acts on the (2E)-decenoyl moiety loaded on the acyl-carrier protein MmaB, forming the product (3R)-3-[(carboxymethyl)amino]decanoate released from MmaB. The protein is (2E)-enoyl-[ACP] glycyltransferase of Mycobacterium marinum (strain ATCC BAA-535 / M).